The chain runs to 652 residues: Phosphomethylpyrimidine synthase (652 aa).

Residues asparagine 235, methionine 264, tyrosine 293, histidine 329, 349-351, 390-393, and glutamate 429 each bind substrate; these read SRG and DGMR. Histidine 433 is a binding site for Zn(2+). Tyrosine 456 serves as a coordination point for substrate. Position 497 (histidine 497) interacts with Zn(2+). Residues cysteine 577, cysteine 580, and cysteine 585 each contribute to the [4Fe-4S] cluster site.

This sequence belongs to the ThiC family. As to quaternary structure, homodimer. It depends on [4Fe-4S] cluster as a cofactor.

It carries out the reaction 5-amino-1-(5-phospho-beta-D-ribosyl)imidazole + S-adenosyl-L-methionine = 4-amino-2-methyl-5-(phosphooxymethyl)pyrimidine + CO + 5'-deoxyadenosine + formate + L-methionine + 3 H(+). It participates in cofactor biosynthesis; thiamine diphosphate biosynthesis. Its function is as follows. Catalyzes the synthesis of the hydroxymethylpyrimidine phosphate (HMP-P) moiety of thiamine from aminoimidazole ribotide (AIR) in a radical S-adenosyl-L-methionine (SAM)-dependent reaction. The chain is Phosphomethylpyrimidine synthase from Shewanella sediminis (strain HAW-EB3).